The primary structure comprises 381 residues: DNA double-strand break repair protein Mre11 (381 aa).

Residues aspartate 9, histidine 11, aspartate 50, and aspartate 85 each coordinate Mn(2+). Histidine 86 (proton donor) is an active-site residue. Positions 156, 187, and 189 each coordinate Mn(2+).

This sequence belongs to the MRE11/RAD32 family. In terms of assembly, homodimer. Forms a heterotetramer composed of two Mre11 subunits and two Rad50 subunits. Mn(2+) serves as cofactor.

Its activity is regulated as follows. Nuclease activity is regulated by Rad50. Part of the Rad50/Mre11 complex, which is involved in the early steps of DNA double-strand break (DSB) repair. The complex may facilitate opening of the processed DNA ends to aid in the recruitment of HerA and NurA. Mre11 binds to DSB ends and has both double-stranded 3'-5' exonuclease activity and single-stranded endonuclease activity. The sequence is that of DNA double-strand break repair protein Mre11 from Saccharolobus solfataricus (strain ATCC 35092 / DSM 1617 / JCM 11322 / P2) (Sulfolobus solfataricus).